The chain runs to 199 residues: N-(5'-phosphoribosyl)anthranilate isomerase (199 aa).

It belongs to the TrpF family.

It carries out the reaction N-(5-phospho-beta-D-ribosyl)anthranilate = 1-(2-carboxyphenylamino)-1-deoxy-D-ribulose 5-phosphate. The protein operates within amino-acid biosynthesis; L-tryptophan biosynthesis; L-tryptophan from chorismate: step 3/5. This is N-(5'-phosphoribosyl)anthranilate isomerase from Clostridium kluyveri (strain NBRC 12016).